The chain runs to 238 residues: Flagellar L-ring protein (238 aa).

Residues 1-23 (MVKLFSYKIKYYLTAFFIIIIQS) form the signal peptide. Residue C24 is the site of N-palmitoyl cysteine attachment. A lipid anchor (S-diacylglycerol cysteine) is attached at C24.

It belongs to the FlgH family. As to quaternary structure, the basal body constitutes a major portion of the flagellar organelle and consists of four rings (L,P,S, and M) mounted on a central rod.

Its subcellular location is the cell outer membrane. The protein localises to the bacterial flagellum basal body. Its function is as follows. Assembles around the rod to form the L-ring and probably protects the motor/basal body from shearing forces during rotation. The chain is Flagellar L-ring protein from Buchnera aphidicola subsp. Schizaphis graminum (strain Sg).